The following is a 533-amino-acid chain: Flavin-containing monooxygenase 5 (533 aa).

Arg-5 is subject to Dimethylated arginine. FAD contacts are provided by residues 10-14, Glu-33, and 41-42; these read GSGAS and LW. At Ser-54 the chain carries Phosphoserine. Residue Tyr-56 is modified to Phosphotyrosine. Ser-58 is modified (phosphoserine). 62-63 serves as a coordination point for FAD; sequence NT. Residue 196–199 coordinates NADP(+); the sequence is SGGD. Thr-284 bears the Phosphothreonine mark. At Ser-401 the chain carries Phosphoserine. The chain crosses the membrane as a helical span at residues 513 to 533; the sequence is LVTVRVLMLAVTFLAVILAYF.

Belongs to the FMO family. It depends on FAD as a cofactor.

The protein localises to the microsome membrane. Its subcellular location is the endoplasmic reticulum membrane. It carries out the reaction N,N-dimethylaniline + NADPH + O2 + H(+) = N,N-dimethylaniline N-oxide + NADP(+) + H2O. The catalysed reaction is NADPH + O2 + H(+) = H2O2 + NADP(+). It catalyses the reaction heptan-2-one + NADPH + O2 + H(+) = pentyl acetate + NADP(+) + H2O. The enzyme catalyses octan-3-one + NADPH + O2 + H(+) = pentyl propanoate + NADP(+) + H2O. It carries out the reaction octan-3-one + NADPH + O2 + H(+) = ethyl hexanoate + NADP(+) + H2O. The catalysed reaction is hexan-3-one + NADPH + O2 + H(+) = ethyl butanoate + NADP(+) + H2O. It catalyses the reaction hexan-3-one + NADPH + O2 + H(+) = propyl propanoate + NADP(+) + H2O. The enzyme catalyses heptan-4-one + NADPH + O2 + H(+) = propyl butanoate + NADP(+) + H2O. It carries out the reaction (2E)-geranial + NADPH + O2 + H(+) = (1E)-2,6-dimethylhepta-1,5-dien-1-yl formate + NADP(+) + H2O. The catalysed reaction is sulcatone + NADPH + O2 + H(+) = 4-methylpent-3-en-1-yl acetate + NADP(+) + H2O. Functionally, acts as a Baeyer-Villiger monooxygenase on a broad range of substrates. Catalyzes the insertion of an oxygen atom into a carbon-carbon bond adjacent to a carbonyl, which converts ketones to esters. Active on diverse carbonyl compounds, whereas soft nucleophiles are mostly non- or poorly reactive. In contrast with other forms of FMO it is non- or poorly active on 'classical' substrates such as drugs, pesticides, and dietary components containing soft nucleophilic heteroatoms. Able to oxidize drug molecules bearing a carbonyl group on an aliphatic chain, such as nabumetone and pentoxifylline. Also, in the absence of substrates, shows slow but yet significant NADPH oxidase activity. Acts as a positive modulator of cholesterol biosynthesis as well as glucose homeostasis, promoting metabolic aging via pleiotropic effects. This chain is Flavin-containing monooxygenase 5, found in Rattus norvegicus (Rat).